The primary structure comprises 600 residues: Glutamine--fructose-6-phosphate aminotransferase [isomerizing] (600 aa).

The Nucleophile; for GATase activity role is filled by C2. In terms of domain architecture, Glutamine amidotransferase type-2 spans C2–D217. SIS domains are found at residues I283–I422 and I452–P590. The active-site For Fru-6P isomerization activity is K595.

In terms of assembly, homodimer.

The protein localises to the cytoplasm. It catalyses the reaction D-fructose 6-phosphate + L-glutamine = D-glucosamine 6-phosphate + L-glutamate. In terms of biological role, catalyzes the first step in hexosamine metabolism, converting fructose-6P into glucosamine-6P using glutamine as a nitrogen source. The chain is Glutamine--fructose-6-phosphate aminotransferase [isomerizing] from Halalkalibacterium halodurans (strain ATCC BAA-125 / DSM 18197 / FERM 7344 / JCM 9153 / C-125) (Bacillus halodurans).